Reading from the N-terminus, the 144-residue chain is Large ribosomal subunit protein uL15 (144 aa).

The disordered stretch occupies residues 1–51; that stretch reads MRLNTLSPAEGAKHSAKRLGRGIGSGLGKTGGRGHKGQKSRTGGKVRRGFE. The segment covering 21 to 31 has biased composition (gly residues); sequence RGIGSGLGKTG. Residues 32 to 47 show a composition bias toward basic residues; that stretch reads GRGHKGQKSRTGGKVR.

This sequence belongs to the universal ribosomal protein uL15 family. In terms of assembly, part of the 50S ribosomal subunit.

Binds to the 23S rRNA. The chain is Large ribosomal subunit protein uL15 from Actinobacillus succinogenes (strain ATCC 55618 / DSM 22257 / CCUG 43843 / 130Z).